A 195-amino-acid chain; its full sequence is Anthranilate synthase component 2 (195 aa).

In terms of domain architecture, Glutamine amidotransferase type-1 spans 1 to 195 (MILIIDNYDS…LKNFLSLSYG (195 aa)). An L-glutamine-binding site is contributed by 52–54 (GPG). The active-site Nucleophile; for GATase activity is Cys79. L-glutamine-binding positions include Gln83 and 129–130 (SL). Active-site residues include His173 and Glu175.

Tetramer of two components I and two components II.

It is found in the plastid. The protein localises to the chloroplast. The enzyme catalyses chorismate + L-glutamine = anthranilate + pyruvate + L-glutamate + H(+). The protein operates within amino-acid biosynthesis; L-tryptophan biosynthesis; L-tryptophan from chorismate: step 1/5. This chain is Anthranilate synthase component 2 (trpG), found in Cyanidium caldarium (Red alga).